A 729-amino-acid polypeptide reads, in one-letter code: Transketolase (729 aa).

His97 contributes to the substrate binding site. Thiamine diphosphate-binding positions include His138 and 186 to 188 (GPL). Asp227 is a Mg(2+) binding site. The thiamine diphosphate site is built by Gly228 and Asn257. Mg(2+) is bound by residues Asn257 and Ile259. Positions 332, 423, and 450 each coordinate substrate. Residue His332 participates in thiamine diphosphate binding. The Proton donor role is filled by Glu477. Phe503 provides a ligand contact to thiamine diphosphate. His527, Asp535, and Arg586 together coordinate substrate.

This sequence belongs to the transketolase family. Homodimer. Mg(2+) is required as a cofactor. The cofactor is Ca(2+). Requires Mn(2+) as cofactor. Co(2+) serves as cofactor. It depends on thiamine diphosphate as a cofactor.

It carries out the reaction D-sedoheptulose 7-phosphate + D-glyceraldehyde 3-phosphate = aldehydo-D-ribose 5-phosphate + D-xylulose 5-phosphate. In terms of biological role, catalyzes the transfer of a two-carbon ketol group from a ketose donor to an aldose acceptor, via a covalent intermediate with the cofactor thiamine pyrophosphate. This is Transketolase (tkt) from Streptococcus pyogenes serotype M18 (strain MGAS8232).